The following is a 164-amino-acid chain: Single-stranded DNA-binding protein 2 (164 aa).

The SSB domain maps to isoleucine 5–glycine 109. The segment at methionine 105 to phenylalanine 164 is disordered. A compositionally biased stretch (gly residues) spans arginine 111–glutamate 122. The short motif at aspartate 159 to phenylalanine 164 is the Important for interaction with partner proteins element.

In terms of assembly, homotetramer.

Its function is as follows. Plays an important role in DNA replication, recombination and repair. Binds to ssDNA and to an array of partner proteins to recruit them to their sites of action during DNA metabolism. In Xylella fastidiosa (strain 9a5c), this protein is Single-stranded DNA-binding protein 2 (ssb2).